The following is a 340-amino-acid chain: Phosphoribosylformylglycinamidine cyclo-ligase (340 aa).

It belongs to the AIR synthase family.

The protein localises to the cytoplasm. It catalyses the reaction 2-formamido-N(1)-(5-O-phospho-beta-D-ribosyl)acetamidine + ATP = 5-amino-1-(5-phospho-beta-D-ribosyl)imidazole + ADP + phosphate + H(+). It functions in the pathway purine metabolism; IMP biosynthesis via de novo pathway; 5-amino-1-(5-phospho-D-ribosyl)imidazole from N(2)-formyl-N(1)-(5-phospho-D-ribosyl)glycinamide: step 2/2. The polypeptide is Phosphoribosylformylglycinamidine cyclo-ligase (Streptococcus pyogenes serotype M12 (strain MGAS2096)).